The sequence spans 332 residues: GTP 3',8-cyclase (332 aa).

A Radical SAM core domain is found at 9 to 220 (RFARKVDYLR…DQVRERIAER (212 aa)). A GTP-binding site is contributed by R18. [4Fe-4S] cluster is bound by residues C25 and C29. Residue Y31 coordinates S-adenosyl-L-methionine. Residue C32 participates in [4Fe-4S] cluster binding. Residue R67 coordinates GTP. G71 serves as a coordination point for S-adenosyl-L-methionine. A GTP-binding site is contributed by T98. Residue S122 coordinates S-adenosyl-L-methionine. K159 is a binding site for GTP. M193 lines the S-adenosyl-L-methionine pocket. Residues C258 and C261 each contribute to the [4Fe-4S] cluster site. Position 263–265 (263–265 (RVR)) interacts with GTP. C275 is a binding site for [4Fe-4S] cluster.

This sequence belongs to the radical SAM superfamily. MoaA family. As to quaternary structure, monomer and homodimer. [4Fe-4S] cluster serves as cofactor.

The catalysed reaction is GTP + AH2 + S-adenosyl-L-methionine = (8S)-3',8-cyclo-7,8-dihydroguanosine 5'-triphosphate + 5'-deoxyadenosine + L-methionine + A + H(+). Its pathway is cofactor biosynthesis; molybdopterin biosynthesis. Catalyzes the cyclization of GTP to (8S)-3',8-cyclo-7,8-dihydroguanosine 5'-triphosphate. In Pseudomonas syringae pv. syringae (strain B728a), this protein is GTP 3',8-cyclase.